The following is a 264-amino-acid chain: 3-methyl-2-oxobutanoate hydroxymethyltransferase (264 aa).

Mg(2+) is bound by residues D45 and D84. Residues 45-46 (DS), D84, and K113 contribute to the 3-methyl-2-oxobutanoate site. E115 serves as a coordination point for Mg(2+). E182 acts as the Proton acceptor in catalysis.

This sequence belongs to the PanB family. In terms of assembly, homodecamer; pentamer of dimers. It depends on Mg(2+) as a cofactor.

It is found in the cytoplasm. It carries out the reaction 3-methyl-2-oxobutanoate + (6R)-5,10-methylene-5,6,7,8-tetrahydrofolate + H2O = 2-dehydropantoate + (6S)-5,6,7,8-tetrahydrofolate. The protein operates within cofactor biosynthesis; (R)-pantothenate biosynthesis; (R)-pantoate from 3-methyl-2-oxobutanoate: step 1/2. Functionally, catalyzes the reversible reaction in which hydroxymethyl group from 5,10-methylenetetrahydrofolate is transferred onto alpha-ketoisovalerate to form ketopantoate. The chain is 3-methyl-2-oxobutanoate hydroxymethyltransferase from Caldicellulosiruptor saccharolyticus (strain ATCC 43494 / DSM 8903 / Tp8T 6331).